A 198-amino-acid chain; its full sequence is Riboflavin synthase (198 aa).

Lumazine-binding repeat units follow at residues 1-95 (MFSG…IGGH) and 96-188 (FVSG…VDTV). 2,4-dihydroxypteridine contacts are provided by residues 4–6 (GII), 46–48 (CLT), 60–65 (DVTEET), 99–101 (GHV), K130, 139–141 (SLT), and 153–158 (SVIPET).

In terms of assembly, homotrimer.

It catalyses the reaction 2 6,7-dimethyl-8-(1-D-ribityl)lumazine + H(+) = 5-amino-6-(D-ribitylamino)uracil + riboflavin. The protein operates within cofactor biosynthesis; riboflavin biosynthesis; riboflavin from 2-hydroxy-3-oxobutyl phosphate and 5-amino-6-(D-ribitylamino)uracil: step 2/2. Functionally, catalyzes the dismutation of two molecules of 6,7-dimethyl-8-ribityllumazine, resulting in the formation of riboflavin and 5-amino-6-(D-ribitylamino)uracil. The protein is Riboflavin synthase (ribE) of Chlamydia muridarum (strain MoPn / Nigg).